A 153-amino-acid chain; its full sequence is Interleukin-4 (153 aa).

Positions 1 to 24 (MGLTSQLLPPLFFLLACAGNFVHG) are cleaved as a signal peptide. Cystine bridges form between C27–C151, C48–C89, and C70–C123. N62 is a glycosylation site (N-linked (GlcNAc...) asparagine).

Belongs to the IL-4/IL-13 family.

It localises to the secreted. Functionally, participates in at least several B-cell activation processes as well as of other cell types. It is a costimulator of DNA-synthesis. It induces the expression of class II MHC molecules on resting B-cells. It enhances both secretion and cell surface expression of IgE and IgG1. It also regulates the expression of the low affinity Fc receptor for IgE (CD23) on both lymphocytes and monocytes. Positively regulates IL31RA expression in macrophages. Stimulates autophagy in dendritic cells by interfering with mTORC1 signaling and through the induction of RUFY4. The sequence is that of Interleukin-4 (IL4) from Macaca fascicularis (Crab-eating macaque).